Here is a 119-residue protein sequence, read N- to C-terminus: MICGVGIDIIELNRMEALIERNERFIERILTENEQRKFQRLSANRKVEYIAGRFAAKEAFAKAVGTGIGKVSFKDIEIINNDYGAPNMKVKGYNDNVIHLSISHSKTYAVANVVLETRE.

Mg(2+)-binding residues include aspartate 8 and glutamate 58.

Belongs to the P-Pant transferase superfamily. AcpS family. Mg(2+) serves as cofactor.

The protein localises to the cytoplasm. It catalyses the reaction apo-[ACP] + CoA = holo-[ACP] + adenosine 3',5'-bisphosphate + H(+). Transfers the 4'-phosphopantetheine moiety from coenzyme A to a Ser of acyl-carrier-protein. This is Holo-[acyl-carrier-protein] synthase from Oceanobacillus iheyensis (strain DSM 14371 / CIP 107618 / JCM 11309 / KCTC 3954 / HTE831).